A 487-amino-acid chain; its full sequence is UDP-N-acetylmuramate--L-alanine ligase (487 aa).

Residue 126–132 (GTHGKTT) coordinates ATP.

This sequence belongs to the MurCDEF family.

The protein resides in the cytoplasm. The catalysed reaction is UDP-N-acetyl-alpha-D-muramate + L-alanine + ATP = UDP-N-acetyl-alpha-D-muramoyl-L-alanine + ADP + phosphate + H(+). It functions in the pathway cell wall biogenesis; peptidoglycan biosynthesis. In terms of biological role, cell wall formation. The sequence is that of UDP-N-acetylmuramate--L-alanine ligase from Proteus mirabilis (strain HI4320).